The sequence spans 351 residues: S-adenosylmethionine:tRNA ribosyltransferase-isomerase (351 aa).

It belongs to the QueA family. In terms of assembly, monomer.

It is found in the cytoplasm. The catalysed reaction is 7-aminomethyl-7-carbaguanosine(34) in tRNA + S-adenosyl-L-methionine = epoxyqueuosine(34) in tRNA + adenine + L-methionine + 2 H(+). It functions in the pathway tRNA modification; tRNA-queuosine biosynthesis. In terms of biological role, transfers and isomerizes the ribose moiety from AdoMet to the 7-aminomethyl group of 7-deazaguanine (preQ1-tRNA) to give epoxyqueuosine (oQ-tRNA). In Hahella chejuensis (strain KCTC 2396), this protein is S-adenosylmethionine:tRNA ribosyltransferase-isomerase.